Consider the following 32-residue polypeptide: Enolase (32 aa).

This sequence belongs to the enolase family. In terms of assembly, homodimer. It depends on Mg(2+) as a cofactor.

The protein resides in the cytoplasm. The catalysed reaction is (2R)-2-phosphoglycerate = phosphoenolpyruvate + H2O. It functions in the pathway carbohydrate degradation; glycolysis; pyruvate from D-glyceraldehyde 3-phosphate: step 4/5. In Imperata cylindrica (Cogon grass), this protein is Enolase.